The primary structure comprises 436 residues: Antilisterial bacteriocin subtilosin biosynthesis protein AlbD (436 aa).

Helical transmembrane passes span 27–47 (IAAGLVILAVFEIGLIRQAGI), 51–71 (VLGKTYIILALLLMNTYMVFL), 112–132 (TLFFFILPLFLFGNGTLSGAQ), 134–154 (LFWLGRFSFFTVYSILFGVML), 166–186 (FLLHAAVFAFVCLSAAFMPAV), 187–207 (TIPLCAVHMLWAVIIDFPVFL), 240–260 (AMLLNYVVMAAFSGFFSFQMM), 270–290 (IYIVISALLLICSPIALLYSI), 315–335 (FYSGLLAGGFLLVAIIVGFIS), and 395–415 (ATLAGTAVSLAVIPIAALIIV).

It localises to the cell membrane. In terms of biological role, involved in the production of the bacteriocin subtilosin. Required for immunity to subtilosin. This Bacillus subtilis protein is Antilisterial bacteriocin subtilosin biosynthesis protein AlbD (albD).